Consider the following 66-residue polypeptide: Toxin Os1 (66 aa).

An LCN-type CS-alpha/beta domain is found at 2-66 (RDGYIVQLHN…PIKWLDPKCY (65 aa)). 4 cysteine pairs are disulfide-bonded: Cys12-Cys65, Cys16-Cys37, Cys22-Cys47, and Cys26-Cys49.

The protein belongs to the long (4 C-C) scorpion toxin superfamily. Sodium channel inhibitor family. Alpha subfamily. In terms of tissue distribution, expressed by the venom gland.

The protein localises to the secreted. Functionally, alpha toxins bind voltage-independently at site-3 of sodium channels (Nav) and inhibit the inactivation of the activated channels, thereby blocking neuronal transmission. This toxin possesses a high paralytic activity against mice. The chain is Toxin Os1 from Orthochirus scrobiculosus (Central Asian scorpion).